The following is a 324-amino-acid chain: Formimidoylglutamase (324 aa).

The Mn(2+) site is built by His124, Asp153, His155, Asp157, Asp245, and Asp247.

It belongs to the arginase family. It depends on Mn(2+) as a cofactor.

It catalyses the reaction N-formimidoyl-L-glutamate + H2O = formamide + L-glutamate. It functions in the pathway amino-acid degradation; L-histidine degradation into L-glutamate; L-glutamate from N-formimidoyl-L-glutamate (hydrolase route): step 1/1. Functionally, catalyzes the conversion of N-formimidoyl-L-glutamate to L-glutamate and formamide. This is Formimidoylglutamase from Hahella chejuensis (strain KCTC 2396).